The following is a 126-amino-acid chain: Penicillinase repressor (126 aa).

The segment at residues 7–71 is a DNA-binding region (H-T-H motif); that stretch reads EISMAEWDVM…KSENIYFYSS (65 aa). Residues 74–126 form an important for dimerization region; that stretch reads KEDDIKMKTAKTFLNKLYGGDMKSLVLNFAKNEELNNKEIEELRDILNDISKK.

This sequence belongs to the BlaI transcriptional regulatory family. As to quaternary structure, homodimer. Post-translationally, upon exposure to beta-lactams, the protease BlaR1 is activated and cleaves BlaI at a single site. This proteolytic cleavage impairs dimerization and abolishes repressor activity.

Its subcellular location is the cytoplasm. Transcriptional repressor that constitutively blocks expression of beta-lactamase. Binds DNA as a dimer. The polypeptide is Penicillinase repressor (blaI) (Staphylococcus aureus).